The following is a 216-amino-acid chain: FMN-dependent NADH:quinone oxidoreductase 2 (216 aa).

FMN is bound by residues S9, 15-17 (SVS), 96-99 (MYNF), and 140-143 (SRGG).

This sequence belongs to the azoreductase type 1 family. In terms of assembly, homodimer. The cofactor is FMN.

It carries out the reaction 2 a quinone + NADH + H(+) = 2 a 1,4-benzosemiquinone + NAD(+). The catalysed reaction is N,N-dimethyl-1,4-phenylenediamine + anthranilate + 2 NAD(+) = 2-(4-dimethylaminophenyl)diazenylbenzoate + 2 NADH + 2 H(+). Its function is as follows. Quinone reductase that provides resistance to thiol-specific stress caused by electrophilic quinones. Functionally, also exhibits azoreductase activity. Catalyzes the reductive cleavage of the azo bond in aromatic azo compounds to the corresponding amines. The sequence is that of FMN-dependent NADH:quinone oxidoreductase 2 from Xanthomonas axonopodis pv. citri (strain 306).